We begin with the raw amino-acid sequence, 784 residues long: LPS-assembly protein LptD (784 aa).

The first 24 residues, Met-1–Ala-24, serve as a signal peptide directing secretion. 2 disulfide bridges follow: Cys-31–Cys-724 and Cys-173–Cys-725.

It belongs to the LptD family. In terms of assembly, component of the lipopolysaccharide transport and assembly complex. Interacts with LptE and LptA. Contains two intramolecular disulfide bonds.

Its subcellular location is the cell outer membrane. Functionally, together with LptE, is involved in the assembly of lipopolysaccharide (LPS) at the surface of the outer membrane. The sequence is that of LPS-assembly protein LptD from Shigella flexneri.